The chain runs to 412 residues: MAGSVGLALCGQTLVVRGGSRFLATSIASSDDDSLFIYDCSAAEKKSQENKGEDAPLDQGSGAILASTFSKSGSYFALTDDSKRLILFRTKPWQCLSVRTVARRCTALTFIASEEKVLVADKSGDVYSFSVLEPHGCGRLELGHLSMLLDVAVSPDDRFILTADRDEKIRVSWAAAPHSIESFCLGHTEFVSRISVVPTQPGLLLSSSGDGTLRLWEYRSGRQLHCCHLASLQELVDPQAPQKFAASRIAFWCQENCVALLCDGTPVVYIFQLDARRQQLVYRQQLAFQHQVWDVAFEETQGLWVLQDCQEAPLVLYRPVGDQWQSVPESTVLKKVSGVLRGNWAMLEGSAGADASFSSLYKATFDNVTSYLKKKEERLQQQLEKKQRRRSPPPGPDGHAKKMRPGEATLSC.

An N-acetylalanine modification is found at A2. WD repeat units follow at residues 3 to 40, 50 to 90, 94 to 131, 137 to 174, 180 to 218, 230 to 273, and 319 to 373; these read GSVGLALCGQTLVVRGGSRFLATSIASSDDDSLFIYDC, NKGE…LFRT, QCLSVRTVARRCTALTFIASEEKVLVADKSGDVYSFSV, CGRLELGHLSMLLDVAVSPDDRFILTADRDEKIRVSWA, IESFCLGHTEFVSRISVVPTQPGLLLSSSGDGTLRLWEY, ASLQ…IFQL, and PVGD…SYLK. The interval 377–412 is disordered; that stretch reads ERLQQQLEKKQRRRSPPPGPDGHAKKMRPGEATLSC. Phosphoserine occurs at positions 391 and 411.

It belongs to the WD repeat TRM82 family. Non-catalytic component of the METTL1-WDR4 complex, composed of METTL1 and WDR4. Interacts with FEN1; the interaction is direct.

Its subcellular location is the nucleus. It is found in the chromosome. Its pathway is tRNA modification; N(7)-methylguanine-tRNA biosynthesis. Functionally, non-catalytic component of the METTL1-WDR4 methyltransferase complex required for the formation of N(7)-methylguanine in a subset of RNA species, such as tRNAs, mRNAs and microRNAs (miRNAs). In the METTL1-WDR4 methyltransferase complex, WDR4 acts as a scaffold for tRNA-binding. Required for the formation of N(7)-methylguanine at position 46 (m7G46) in a large subset of tRNAs that contain the 5'-RAGGU-3' motif within the variable loop. M7G46 interacts with C13-G22 in the D-loop to stabilize tRNA tertiary structure and protect tRNAs from decay. Also required for the formation of N(7)-methylguanine at internal sites in a subset of mRNAs. Also required for methylation of a specific subset of miRNAs, such as let-7. Independently of METTL1, also plays a role in genome stability: localizes at the DNA replication site and regulates endonucleolytic activities of FEN1. The chain is tRNA (guanine-N(7)-)-methyltransferase non-catalytic subunit WDR4 from Homo sapiens (Human).